A 146-amino-acid chain; its full sequence is Large ribosomal subunit protein uL13 (146 aa).

It belongs to the universal ribosomal protein uL13 family. As to quaternary structure, part of the 50S ribosomal subunit.

Functionally, this protein is one of the early assembly proteins of the 50S ribosomal subunit, although it is not seen to bind rRNA by itself. It is important during the early stages of 50S assembly. The polypeptide is Large ribosomal subunit protein uL13 (Mycoplasma genitalium (strain ATCC 33530 / DSM 19775 / NCTC 10195 / G37) (Mycoplasmoides genitalium)).